Consider the following 162-residue polypeptide: Caveolin-2 (162 aa).

At 1–86 (MGLETEKADV…FEISKYVVYK (86 aa)) the chain is on the cytoplasmic side. Tyr-19 bears the Phosphotyrosine; by SRC mark. 2 positions are modified to phosphoserine: Ser-20 and Ser-23. Phosphotyrosine; by SRC is present on Tyr-27. Ser-36 carries the post-translational modification Phosphoserine. An intramembrane region (helical) is located at residues 87–107 (FLTVFLAIPLAFAAGILFATL). Residues 108–162 (SCLHIWIIMPFVKTCLMVLPSVQTVWKTVTDVVIAPLCASVGRSFSSVSLQLSHD) are Cytoplasmic-facing.

The protein belongs to the caveolin family. As to quaternary structure, monomer or homodimer. Interacts with CAV1; the interaction forms a stable heterooligomeric complex that is required for targeting to lipid rafts and for caveolae formation. Tyrosine phosphorylated forms do not form heterooligomers with the Tyr-19-phosphorylated form existing as a monomer or dimer, and the Tyr-27-form as a monomer only. Interacts (tyrosine phosphorylated form) with the SH2 domain-containing proteins, RASA1, NCK1 and SRC. Interacts (tyrosine phosphorylated form) with INSR, the interaction (Tyr-27-phosphorylated form) is increased on insulin stimulation. Interacts (Tyr-19 phosphorylated form) with MAPK1 (phosphorylated form); the interaction, promoted by insulin, leads to nuclear location and MAPK1 activation. Interacts with STAT3; the interaction is increased on insulin-induced tyrosine phosphorylation leading to STAT activation. In terms of processing, phosphorylated on serine and tyrosine residues. CAV1 promotes phosphorylation on Ser-23 which then targets the complex to the plasma membrane, lipid rafts and caveolae. Phosphorylation on Ser-36 appears to modulate mitosis in endothelial cells. Phosphorylation on both Tyr-19 and Tyr-27 is required for insulin-induced 'Ser-727' phosphorylation of STAT3 and its activation. Phosphorylation on Tyr-19 is required for insulin-induced phosphorylation of MAPK1 and DNA binding of STAT3. Tyrosine phosphorylation is induced by both EGF and insulin (By. similarity).

It is found in the nucleus. Its subcellular location is the cytoplasm. It localises to the golgi apparatus membrane. The protein resides in the cell membrane. The protein localises to the membrane. It is found in the caveola. May act as a scaffolding protein within caveolar membranes. Interacts directly with G-protein alpha subunits and can functionally regulate their activity. Acts as an accessory protein in conjunction with CAV1 in targeting to lipid rafts and driving caveolae formation. The Ser-36 phosphorylated form has a role in modulating mitosis in endothelial cells. Positive regulator of cellular mitogenesis of the MAPK signaling pathway. Required for the insulin-stimulated nuclear translocation and activation of MAPK1 and STAT3, and the subsequent regulation of cell cycle progression. The protein is Caveolin-2 (CAV2) of Loxodonta africana (African elephant).